A 557-amino-acid chain; its full sequence is Ras-specific guanine nucleotide-releasing factor RalGPS2 (557 aa).

The 239-residue stretch at 49-287 folds into the Ras-GEF domain; that stretch reads TPEEYAGQIT…YKLSLKIEPG (239 aa). Residues 283-314 are disordered; the sequence is KIEPGTSTPRSAASREDLVGPEVGASPQSGRK. Residues Ser293, Ser296, Ser308, and Ser311 each carry the phosphoserine modification. Thr326 is modified (phosphothreonine). Residues 327–330 carry the PXXP motif; the sequence is PPSP. Phosphoserine is present on residues Ser329 and Ser343. Position 361 is a phosphothreonine (Thr361). The disordered stretch occupies residues 368–409; sequence RHLLDDSVMEPHAPSRGQAESSTLSSGISIGSSDGSELSEET. Residue Ser374 is modified to Phosphoserine. A compositionally biased stretch (low complexity) spans 387–403; it reads ESSTLSSGISIGSSDGS. Residues 431–543 enclose the PH domain; the sequence is AVTIQGVLRR…WFKHLSAACQ (113 aa). Positions 433-557 are required for stimulation of nucleotide exchange by RALA; it reads TIQGVLRRKT…QVPTNLMTFE (125 aa).

In terms of assembly, interacts with the SH3 domains of GRB2 and PLCG1. Interacts with RALA.

The protein localises to the cytoplasm. It localises to the cell membrane. Guanine nucleotide exchange factor for the small GTPase RALA. May be involved in cytoskeletal organization. May also be involved in the stimulation of transcription in a Ras-independent fashion. The chain is Ras-specific guanine nucleotide-releasing factor RalGPS2 (RALGPS2) from Macaca fascicularis (Crab-eating macaque).